The sequence spans 833 residues: Glycerol-3-phosphate acyltransferase (833 aa).

Positions His-310–Asp-315 match the HXXXXD motif motif.

This sequence belongs to the GPAT/DAPAT family.

The protein resides in the cell inner membrane. The catalysed reaction is sn-glycerol 3-phosphate + an acyl-CoA = a 1-acyl-sn-glycero-3-phosphate + CoA. Its pathway is phospholipid metabolism; CDP-diacylglycerol biosynthesis; CDP-diacylglycerol from sn-glycerol 3-phosphate: step 1/3. The polypeptide is Glycerol-3-phosphate acyltransferase (Pseudomonas syringae pv. tomato (strain ATCC BAA-871 / DC3000)).